A 283-amino-acid polypeptide reads, in one-letter code: Pantothenate synthetase (283 aa).

30-37 (MGNLHDGH) provides a ligand contact to ATP. Histidine 37 functions as the Proton donor in the catalytic mechanism. Residue glutamine 61 participates in (R)-pantoate binding. Glutamine 61 lines the beta-alanine pocket. 149-152 (GEKD) is a binding site for ATP. Glutamine 155 contributes to the (R)-pantoate binding site. 186–189 (LSSR) serves as a coordination point for ATP.

This sequence belongs to the pantothenate synthetase family. Homodimer.

It is found in the cytoplasm. It catalyses the reaction (R)-pantoate + beta-alanine + ATP = (R)-pantothenate + AMP + diphosphate + H(+). The protein operates within cofactor biosynthesis; (R)-pantothenate biosynthesis; (R)-pantothenate from (R)-pantoate and beta-alanine: step 1/1. Functionally, catalyzes the condensation of pantoate with beta-alanine in an ATP-dependent reaction via a pantoyl-adenylate intermediate. In Escherichia fergusonii (strain ATCC 35469 / DSM 13698 / CCUG 18766 / IAM 14443 / JCM 21226 / LMG 7866 / NBRC 102419 / NCTC 12128 / CDC 0568-73), this protein is Pantothenate synthetase.